We begin with the raw amino-acid sequence, 308 residues long: Glutaminase (308 aa).

Residues Ser66, Asn117, Glu161, Asn168, Tyr192, Tyr244, and Val262 each coordinate substrate.

The protein belongs to the glutaminase family. Homotetramer.

It catalyses the reaction L-glutamine + H2O = L-glutamate + NH4(+). This Shigella dysenteriae serotype 1 (strain Sd197) protein is Glutaminase.